Here is a 120-residue protein sequence, read N- to C-terminus: Large ribosomal subunit protein uL18 (120 aa).

It belongs to the universal ribosomal protein uL18 family. In terms of assembly, part of the 50S ribosomal subunit; part of the 5S rRNA/L5/L18/L25 subcomplex. Contacts the 5S and 23S rRNAs.

Its function is as follows. This is one of the proteins that bind and probably mediate the attachment of the 5S RNA into the large ribosomal subunit, where it forms part of the central protuberance. The polypeptide is Large ribosomal subunit protein uL18 (Brucella abortus (strain S19)).